Here is a 655-residue protein sequence, read N- to C-terminus: p-hydroxybenzoic acid efflux pump subunit AaeB (655 aa).

Over 1–12 (MGIFSIANQHIR) the chain is Periplasmic. A helical transmembrane segment spans residues 13–33 (FAVKLATAIVLALFVGFHFQL). At 34–37 (ETPR) the chain is on the cytoplasmic side. Residues 38 to 58 (WAVLTAAIVAAGPAFAAGGEP) traverse the membrane as a helical segment. Topologically, residues 59 to 68 (YSGAIRYRGF) are periplasmic. Residues 69-89 (LRIIGTFIGCIAGLVIIIAMI) traverse the membrane as a helical segment. Topologically, residues 90–92 (RAP) are cytoplasmic. A helical transmembrane segment spans residues 93–113 (LLMILVCCIWAGFCTWISSLV). Residues 114–120 (RIENSYA) are Periplasmic-facing. A helical transmembrane segment spans residues 121–141 (WGLAGYTALIIVITIQPEPLL). The Cytoplasmic segment spans residues 142–151 (TPQFAVERCS). Residues 152 to 172 (EIVIGIVCAIMADLLFSPRSI) form a helical membrane-spanning segment. Residues 173–369 (KQEVDRELES…RTTLSCILGT (197 aa)) are Periplasmic-facing. The chain crosses the membrane as a helical span at residues 370–390 (LFWLWTGWTSGSGAMVMIAVV). Over 391–406 (TSLAMRLPNPRMVAID) the chain is Cytoplasmic. A helical membrane pass occupies residues 407–427 (FIYGTLAALPLGLLYFLVIIP). Residues 428 to 430 (NTQ) are Periplasmic-facing. The chain crosses the membrane as a helical span at residues 431–451 (QSMLLLCISLAVLGFFLGIEV). Residues 452–458 (QKRRLGS) are Cytoplasmic-facing. A helical membrane pass occupies residues 459–479 (MGALASTINIIVLDNPMTFHF). Over 480–481 (SQ) the chain is Periplasmic. A helical membrane pass occupies residues 482–502 (FLDSALGQIVGCVLAFTVILL). Over 503–655 (VRDKSRDRTG…HKYQHALTDS (153 aa)) the chain is Cytoplasmic.

This sequence belongs to the aromatic acid exporter ArAE (TC 2.A.85) family.

The protein resides in the cell inner membrane. Its function is as follows. Forms an efflux pump with AaeA. Could function as a metabolic relief valve, allowing to eliminate certain compounds when they accumulate to high levels in the cell. In Escherichia coli O6:H1 (strain CFT073 / ATCC 700928 / UPEC), this protein is p-hydroxybenzoic acid efflux pump subunit AaeB.